Consider the following 209-residue polypeptide: Na(+)-translocating NADH-quinone reductase subunit D (209 aa).

The next 5 membrane-spanning stretches (helical) occupy residues 42 to 62 (VVMT…ISLI), 66 to 86 (IPNS…VIVV), 95 to 115 (FEIS…CIVM), 131 to 151 (FMDG…VGFL), and 178 to 198 (NGLF…IWAL).

Belongs to the NqrDE/RnfAE family. Composed of six subunits; NqrA, NqrB, NqrC, NqrD, NqrE and NqrF.

Its subcellular location is the cell inner membrane. The enzyme catalyses a ubiquinone + n Na(+)(in) + NADH + H(+) = a ubiquinol + n Na(+)(out) + NAD(+). Its function is as follows. NQR complex catalyzes the reduction of ubiquinone-1 to ubiquinol by two successive reactions, coupled with the transport of Na(+) ions from the cytoplasm to the periplasm. NqrA to NqrE are probably involved in the second step, the conversion of ubisemiquinone to ubiquinol. The protein is Na(+)-translocating NADH-quinone reductase subunit D of Serratia proteamaculans (strain 568).